The following is a 43-amino-acid chain: Protein PsbN (43 aa).

Residues 5-27 (TFLSIFISAALLGITGYSIYTAF) form a helical membrane-spanning segment.

The protein belongs to the PsbN family.

The protein resides in the plastid. It localises to the cyanelle thylakoid membrane. Its function is as follows. May play a role in photosystem I and II biogenesis. The chain is Protein PsbN from Cyanophora paradoxa.